Reading from the N-terminus, the 191-residue chain is MKAYTAAGLDEVGRGALFGPVFAGAVILDNQAEDQLIDAGLKDSKKLSALKRSNLVPLIKKISHCWAIGQSSAREIDLLGIRNATEKAMIRAVHRLEKQPDVLLIDGCLNLRLWHGEQKTVIKGEDLYPSIAAASVLAKVARDDLIKRMAEKYPQYGLEKHVGYGTALHRAAISKFGKTKLHRKTFLSKIQ.

The region spanning 4-191 is the RNase H type-2 domain; that stretch reads YTAAGLDEVG…HRKTFLSKIQ (188 aa). A divalent metal cation is bound by residues D10, E11, and D106.

It belongs to the RNase HII family. Requires Mn(2+) as cofactor. It depends on Mg(2+) as a cofactor.

Its subcellular location is the cytoplasm. It catalyses the reaction Endonucleolytic cleavage to 5'-phosphomonoester.. Endonuclease that specifically degrades the RNA of RNA-DNA hybrids. This is Ribonuclease HII from Prochlorococcus marinus (strain SARG / CCMP1375 / SS120).